Here is a 144-residue protein sequence, read N- to C-terminus: 3-dehydroquinate dehydratase (144 aa).

Tyrosine 23 serves as the catalytic Proton acceptor. Residues asparagine 74, histidine 80, and aspartate 87 each contribute to the substrate site. The active-site Proton donor is histidine 101. Substrate-binding positions include 102 to 103 (LS) and arginine 112.

It belongs to the type-II 3-dehydroquinase family. In terms of assembly, homododecamer.

The enzyme catalyses 3-dehydroquinate = 3-dehydroshikimate + H2O. Its pathway is metabolic intermediate biosynthesis; chorismate biosynthesis; chorismate from D-erythrose 4-phosphate and phosphoenolpyruvate: step 3/7. Functionally, catalyzes a trans-dehydration via an enolate intermediate. This chain is 3-dehydroquinate dehydratase, found in Mesorhizobium japonicum (strain LMG 29417 / CECT 9101 / MAFF 303099) (Mesorhizobium loti (strain MAFF 303099)).